The following is a 459-amino-acid chain: DNA-binding protein P3A2 (459 aa).

The interval 1–25 (MMISEDISEPSSPDTPFDDSDLLNS) is disordered.

It belongs to the NRF1/Ewg family.

It localises to the nucleus. In terms of biological role, transcriptional regulator that interacts with specific sites in the control region of the cyIIIa actin gene. Also binds specifically to similar target sites located in the regulatory region of the SM50 gene. The polypeptide is DNA-binding protein P3A2 (Strongylocentrotus purpuratus (Purple sea urchin)).